Here is a 65-residue protein sequence, read N- to C-terminus: uncharacterized protein (65 aa).

It localises to the plastid. The protein localises to the chloroplast. This is an uncharacterized protein from Mesostigma viride (Green alga).